Reading from the N-terminus, the 1562-residue chain is Neuralized-like protein 4 (1562 aa).

The span at 1 to 42 (MAAGSGGSGGSGGGPGPGPGGGGGPSGSGSGPGSNGGLGSGG) shows a compositional bias: gly residues. 2 disordered regions span residues 1–48 (MAAG…HPRT) and 207–236 (PEPG…LAEQ). NHR domains lie at 41 to 207 (GGEL…VLPP) and 317 to 484 (ALLF…IVHN). Over residues 207–224 (PEPGFSPPTPIPTPPLEP) the composition is skewed to pro residues. Serine 502 carries the post-translational modification Phosphoserine. NHR domains follow at residues 520-686 (RLLF…IVDD) and 716-884 (DLRF…ITNA). The tract at residues 691–716 (PVPEPLPEGNNQVSPSSPSSGAGGSD) is disordered. At serine 907 the chain carries Phosphoserine. In terms of domain architecture, NHR 5 spans 913–1086 (AHRFHSTCGK…PVRGVSIVSS (174 aa)). A disordered region spans residues 1086–1123 (STRLEESEGTQPPSPSSDTGSEGEEDDEGEEHGLGGQN). Residues 1106–1115 (SEGEEDDEGE) show a composition bias toward acidic residues. The NHR 6 domain maps to 1131–1294 (TLEFLENHGK…QCEQVTIVNP (164 aa)).

Interacts with CCP110; this interaction propmotes CCP110 ubiquitination and degradation via the proteasome pathway. Via its interaction with CCP110, may indirectly interact with CEP97. Interacts with the E3 ubiquitin-protein ligase HERC2 and UBE3A. May interact with MAPK6 and hence mediate MAPK6 interaction with UBE3A. Interaction with UBE3A may be indirect and mediated by HERC2. Ubiquitinated; undergoes HERC2-dependent 'Lys-48' ubiquitination. This ubiquitination leads to proteasomal degradation. Widely expressed at high levels (including brain).

Its subcellular location is the cytoplasm. The protein localises to the cytoskeleton. It is found in the microtubule organizing center. It localises to the centrosome. The protein resides in the centriole. Its function is as follows. Promotes CCP110 ubiquitination and proteasome-dependent degradation. By counteracting accumulation of CP110, maintains normal centriolar homeostasis and preventing formation of ectopic microtubular organizing centers. This chain is Neuralized-like protein 4 (NEURL4), found in Homo sapiens (Human).